A 231-amino-acid polypeptide reads, in one-letter code: 2-C-methyl-D-erythritol 4-phosphate cytidylyltransferase (231 aa).

This sequence belongs to the IspD/TarI cytidylyltransferase family. IspD subfamily.

It carries out the reaction 2-C-methyl-D-erythritol 4-phosphate + CTP + H(+) = 4-CDP-2-C-methyl-D-erythritol + diphosphate. The protein operates within isoprenoid biosynthesis; isopentenyl diphosphate biosynthesis via DXP pathway; isopentenyl diphosphate from 1-deoxy-D-xylulose 5-phosphate: step 2/6. Catalyzes the formation of 4-diphosphocytidyl-2-C-methyl-D-erythritol from CTP and 2-C-methyl-D-erythritol 4-phosphate (MEP). The chain is 2-C-methyl-D-erythritol 4-phosphate cytidylyltransferase from Bacillus licheniformis (strain ATCC 14580 / DSM 13 / JCM 2505 / CCUG 7422 / NBRC 12200 / NCIMB 9375 / NCTC 10341 / NRRL NRS-1264 / Gibson 46).